Consider the following 692-residue polypeptide: E3 ubiquitin-protein ligase brl1 (692 aa).

Residues 302-370 (SNEEKIESIN…RNERDSLVAK (69 aa)) adopt a coiled-coil conformation. Residues 639–679 (CSVCNFSNWKSKLIPNCGHAFCSNCMEPFYEHKTSTCPQCE) form an RING-type zinc finger.

This sequence belongs to the BRE1 family. Component of the histone H2B ubiquitin ligase complex (HULC) composed of at least brl1, brl2, rhp6 and shf1.

It localises to the nucleus. It catalyses the reaction S-ubiquitinyl-[E2 ubiquitin-conjugating enzyme]-L-cysteine + [acceptor protein]-L-lysine = [E2 ubiquitin-conjugating enzyme]-L-cysteine + N(6)-ubiquitinyl-[acceptor protein]-L-lysine.. The protein operates within protein modification; protein ubiquitination. E3 ubiquitin-protein ligase which belongs to the histone H2B ubiquitin ligase complex (HULC) which mediates monoubiquitination of histone H2B to form H2BK123ub1. H2BK123ub1 gives a specific tag for epigenetic transcriptional activation and is also a prerequisite for H3K4me and H3K79me formation. The protein is E3 ubiquitin-protein ligase brl1 (brl1) of Schizosaccharomyces pombe (strain 972 / ATCC 24843) (Fission yeast).